A 337-amino-acid polypeptide reads, in one-letter code: Probable dual-specificity RNA methyltransferase RlmN (337 aa).

Residue Glu-88 is the Proton acceptor of the active site. The 231-residue stretch at 94–324 folds into the Radical SAM core domain; the sequence is SEKRLTVCVS…VRYSRGLATD (231 aa). An intrachain disulfide couples Cys-101 to Cys-327. The [4Fe-4S] cluster site is built by Cys-108, Cys-112, and Cys-115. S-adenosyl-L-methionine is bound by residues 155-156, Ser-185, 208-210, and Asn-284; these read GE and SLH. Residue Cys-327 is the S-methylcysteine intermediate of the active site.

Belongs to the radical SAM superfamily. RlmN family. It depends on [4Fe-4S] cluster as a cofactor.

The protein resides in the cytoplasm. The catalysed reaction is adenosine(2503) in 23S rRNA + 2 reduced [2Fe-2S]-[ferredoxin] + 2 S-adenosyl-L-methionine = 2-methyladenosine(2503) in 23S rRNA + 5'-deoxyadenosine + L-methionine + 2 oxidized [2Fe-2S]-[ferredoxin] + S-adenosyl-L-homocysteine. The enzyme catalyses adenosine(37) in tRNA + 2 reduced [2Fe-2S]-[ferredoxin] + 2 S-adenosyl-L-methionine = 2-methyladenosine(37) in tRNA + 5'-deoxyadenosine + L-methionine + 2 oxidized [2Fe-2S]-[ferredoxin] + S-adenosyl-L-homocysteine. Functionally, specifically methylates position 2 of adenine 2503 in 23S rRNA and position 2 of adenine 37 in tRNAs. The sequence is that of Probable dual-specificity RNA methyltransferase RlmN from Microcystis aeruginosa (strain NIES-843 / IAM M-2473).